The sequence spans 433 residues: 3-phosphoshikimate 1-carboxyvinyltransferase (433 aa).

3-phosphoshikimate-binding residues include lysine 23, serine 24, and arginine 28. Phosphoenolpyruvate is bound at residue lysine 23. Positions 95 and 123 each coordinate phosphoenolpyruvate. The 3-phosphoshikimate site is built by serine 167, glutamine 169, aspartate 317, and lysine 344. Glutamine 169 lines the phosphoenolpyruvate pocket. The active-site Proton acceptor is aspartate 317. Residues arginine 348 and arginine 390 each contribute to the phosphoenolpyruvate site.

Belongs to the EPSP synthase family. As to quaternary structure, monomer.

The protein resides in the cytoplasm. The catalysed reaction is 3-phosphoshikimate + phosphoenolpyruvate = 5-O-(1-carboxyvinyl)-3-phosphoshikimate + phosphate. The protein operates within metabolic intermediate biosynthesis; chorismate biosynthesis; chorismate from D-erythrose 4-phosphate and phosphoenolpyruvate: step 6/7. Functionally, catalyzes the transfer of the enolpyruvyl moiety of phosphoenolpyruvate (PEP) to the 5-hydroxyl of shikimate-3-phosphate (S3P) to produce enolpyruvyl shikimate-3-phosphate and inorganic phosphate. The polypeptide is 3-phosphoshikimate 1-carboxyvinyltransferase (Staphylococcus epidermidis (strain ATCC 35984 / DSM 28319 / BCRC 17069 / CCUG 31568 / BM 3577 / RP62A)).